The sequence spans 433 residues: Trigger factor (433 aa).

A PPIase FKBP-type domain is found at 163-248; it reads GDFVTFDFKG…IKEIKVKELP (86 aa).

This sequence belongs to the FKBP-type PPIase family. Tig subfamily.

Its subcellular location is the cytoplasm. The enzyme catalyses [protein]-peptidylproline (omega=180) = [protein]-peptidylproline (omega=0). Functionally, involved in protein export. Acts as a chaperone by maintaining the newly synthesized protein in an open conformation. Functions as a peptidyl-prolyl cis-trans isomerase. In Geotalea uraniireducens (strain Rf4) (Geobacter uraniireducens), this protein is Trigger factor.